The following is a 752-amino-acid chain: DNA ligase (752 aa).

NAD(+)-binding positions include 48-52 (DADYD), 97-98 (SL), and Glu131. Lys133 (N6-AMP-lysine intermediate) is an active-site residue. The NAD(+) site is built by Arg154, Glu189, Lys305, and Lys329. The Zn(2+) site is built by Cys434, Cys437, Cys452, and Cys458. Over residues 599–615 (ADEGRRASLQPQRDKAW) the composition is skewed to basic and acidic residues. The disordered stretch occupies residues 599 to 618 (ADEGRRASLQPQRDKAWADT). The region spanning 673–752 (ATQSAVAGLT…EQWLDRIGDA (80 aa)) is the BRCT domain.

This sequence belongs to the NAD-dependent DNA ligase family. LigA subfamily. Mg(2+) is required as a cofactor. Mn(2+) serves as cofactor.

The enzyme catalyses NAD(+) + (deoxyribonucleotide)n-3'-hydroxyl + 5'-phospho-(deoxyribonucleotide)m = (deoxyribonucleotide)n+m + AMP + beta-nicotinamide D-nucleotide.. In terms of biological role, DNA ligase that catalyzes the formation of phosphodiester linkages between 5'-phosphoryl and 3'-hydroxyl groups in double-stranded DNA using NAD as a coenzyme and as the energy source for the reaction. It is essential for DNA replication and repair of damaged DNA. In Jannaschia sp. (strain CCS1), this protein is DNA ligase.